Here is a 252-residue protein sequence, read N- to C-terminus: Small ribosomal subunit protein uS2 (252 aa).

Position 2 is an N-acetylserine (Ser2). The span at 213–222 shows a compositional bias: low complexity; sequence QVAEETAGAA. A disordered region spans residues 213 to 252; that stretch reads QVAEETAGAATEEEEAKEEVTEEQTEATEWAEETTEAVAW. Residues 223 to 252 show a composition bias toward acidic residues; sequence TEEEEAKEEVTEEQTEATEWAEETTEAVAW.

This sequence belongs to the universal ribosomal protein uS2 family. In terms of assembly, component of the small ribosomal subunit. Mature ribosomes consist of a small (40S) and a large (60S) subunit. The 40S subunit contains about 33 different proteins and 1 molecule of RNA (18S). The 60S subunit contains about 49 different proteins and 3 molecules of RNA (25S, 5.8S and 5S). Interacts with RPS21.

The protein resides in the cytoplasm. In terms of biological role, required for the assembly and/or stability of the 40S ribosomal subunit. Required for the processing of the 20S rRNA-precursor to mature 18S rRNA in a late step of the maturation of 40S ribosomal subunits. The protein is Small ribosomal subunit protein uS2 of Zygosaccharomyces rouxii (strain ATCC 2623 / CBS 732 / NBRC 1130 / NCYC 568 / NRRL Y-229).